A 71-amino-acid chain; its full sequence is Small ribosomal subunit protein bS21 (71 aa).

Positions 40–71 (KPTQERKRKAAAAVKRNIRRTSRDVTKRKRLY) are disordered. The segment covering 45–71 (RKRKAAAAVKRNIRRTSRDVTKRKRLY) has biased composition (basic residues).

Belongs to the bacterial ribosomal protein bS21 family.

This is Small ribosomal subunit protein bS21 from Xylella fastidiosa (strain M23).